The following is an 83-amino-acid chain: Kunitz-type serine protease inhibitor tigerin-1 (83 aa).

The N-terminal stretch at 1–24 (MSSGGLLLLLGLLTLWAELTPVSS) is a signal peptide. The BPTI/Kunitz inhibitor domain occupies 31–81 (CELPADSGPCRGILHAFYYHPVHRTCLEFIYGGCYGNANNFKTIDECKRTC). Disulfide bonds link C31/C81, C40/C64, and C56/C77.

Belongs to the venom Kunitz-type family. In terms of tissue distribution, expressed by the venom gland.

It localises to the secreted. Serine protease inhibitor. This chain is Kunitz-type serine protease inhibitor tigerin-1, found in Notechis scutatus scutatus (Mainland tiger snake).